A 333-amino-acid chain; its full sequence is UDP-glucose 4-epimerase (333 aa).

NAD(+) contacts are provided by residues 11 to 12, 32 to 37, 52 to 53, 75 to 79, Asn-94, Thr-119, Tyr-143, Lys-147, and Phe-171; these read YI, DSLVTG, DL, and FAAYS. 2 residues coordinate substrate: Thr-119 and Tyr-143. Catalysis depends on Tyr-143, which acts as the Proton acceptor. Residues Asn-172, 191–192, 208–210, Arg-223, and 284–287 each bind substrate; these read HL, MIF, and RSGD.

This sequence belongs to the NAD(P)-dependent epimerase/dehydratase family. As to quaternary structure, homodimer. NAD(+) serves as cofactor.

The enzyme catalyses UDP-alpha-D-glucose = UDP-alpha-D-galactose. Its pathway is carbohydrate metabolism; galactose metabolism. Involved in the metabolism of galactose. Catalyzes the conversion of UDP-galactose (UDP-Gal) to UDP-glucose (UDP-Glc) through a mechanism involving the transient reduction of NAD. In Streptococcus mutans serotype c (strain ATCC 700610 / UA159), this protein is UDP-glucose 4-epimerase (galE).